The sequence spans 316 residues: Phospho-N-acetylmuramoyl-pentapeptide-transferase (316 aa).

10 consecutive transmembrane segments (helical) span residues 5 to 25, 52 to 72, 76 to 96, 116 to 136, 145 to 165, 172 to 192, 195 to 212, 221 to 241, 244 to 264, and 296 to 316; these read IIFA…FFIP, TMGG…FSPW, LFIL…DDFL, FLLA…EIIV, LANF…NSVN, GLAA…ALFL, VTYG…LGFL, VFMG…VALL, LPLI…SVIL, and VVYS…YSLS.

This sequence belongs to the glycosyltransferase 4 family. MraY subfamily. The cofactor is Mg(2+).

It localises to the cell membrane. The enzyme catalyses UDP-N-acetyl-alpha-D-muramoyl-L-alanyl-gamma-D-glutamyl-meso-2,6-diaminopimeloyl-D-alanyl-D-alanine + di-trans,octa-cis-undecaprenyl phosphate = di-trans,octa-cis-undecaprenyl diphospho-N-acetyl-alpha-D-muramoyl-L-alanyl-D-glutamyl-meso-2,6-diaminopimeloyl-D-alanyl-D-alanine + UMP. Its pathway is cell wall biogenesis; peptidoglycan biosynthesis. In terms of biological role, catalyzes the initial step of the lipid cycle reactions in the biosynthesis of the cell wall peptidoglycan: transfers peptidoglycan precursor phospho-MurNAc-pentapeptide from UDP-MurNAc-pentapeptide onto the lipid carrier undecaprenyl phosphate, yielding undecaprenyl-pyrophosphoryl-MurNAc-pentapeptide, known as lipid I. The chain is Phospho-N-acetylmuramoyl-pentapeptide-transferase from Caldanaerobacter subterraneus subsp. tengcongensis (strain DSM 15242 / JCM 11007 / NBRC 100824 / MB4) (Thermoanaerobacter tengcongensis).